The chain runs to 277 residues: MNDAIHVQGLNKTFSHKSALVDLALSIQPGEMVALIGASGSGKSTLLRHLAGLACCDRSNGGQVQVLGREVQSSGRLNSQVRRLRADIGYIFQQFNLVNRLSVLDNVLLGCLGRMPRWRGSLALFNREEKQRAMAALDRVGLADLATQRASTLSGGQQQRVAIARALTQRAEVILADEPIASLDPESARRVMEILADINRSDGKTVVVTLHQVDYAVRYCPRAVALKGGRIHFDGLAQDLSKQFLNDLYGADADASLMITERSRRVRQKPRLELAKV.

One can recognise an ABC transporter domain in the interval 5 to 253 (IHVQGLNKTF…FLNDLYGADA (249 aa)). An ATP-binding site is contributed by 37–44 (GASGSGKS).

Belongs to the ABC transporter superfamily. Phosphonates importer (TC 3.A.1.9.1) family. In terms of assembly, the complex is composed of two ATP-binding proteins (PhnC), two transmembrane proteins (PhnE) and a solute-binding protein (PhnD).

It is found in the cell inner membrane. It carries out the reaction phosphonate(out) + ATP + H2O = phosphonate(in) + ADP + phosphate + H(+). Part of the ABC transporter complex PhnCDE involved in phosphonates import. Responsible for energy coupling to the transport system. This is Phosphonates import ATP-binding protein PhnC 2 from Pseudomonas savastanoi pv. phaseolicola (strain 1448A / Race 6) (Pseudomonas syringae pv. phaseolicola (strain 1448A / Race 6)).